The chain runs to 1893 residues: Plexin-A4 (1893 aa).

The signal sequence occupies residues 1–23 (MKAMPWNWTCLLSHLLVVGMGSS). The Sema domain occupies 24–506 (TLLPRQPPQL…SERQLTRVPV (483 aa)). Residues 24 to 1236 (TLLPRQPPQL…IAPDSPLSLP (1213 aa)) lie on the Extracellular side of the membrane. Disulfide bonds link Cys-94-Cys-103, Cys-129-Cys-137, Cys-283-Cys-404, Cys-299-Cys-355, Cys-373-Cys-392, Cys-509-Cys-526, Cys-515-Cys-557, Cys-518-Cys-535, Cys-529-Cys-541, and Cys-592-Cys-611. The PSI 1 domain maps to 508–558 (SCGQYRSCGECLGSGDPHCGWCVLHNTCTRKERCERSREPRRFASEMKQCV). An N-linked (GlcNAc...) asparagine glycan is attached at Asn-654. 2 PSI domains span residues 654–701 (NCSV…EDCP) and 802–855 (KCGA…SKCT). 4 consecutive IPT/TIG domains span residues 857-951 (PRIT…YYFM), 953-1036 (LTLA…FQYV), 1039-1138 (PTIV…FTYY), and 1141-1229 (PVFE…YIAP). Asn-1006, Asn-1131, and Asn-1179 each carry an N-linked (GlcNAc...) asparagine glycan. A helical membrane pass occupies residues 1237 to 1257 (AIVSIAVAGGLLIIFIVAVLI). Residues 1258–1893 (AYKRKSRESD…QVITLMSLDS (636 aa)) lie on the Cytoplasmic side of the membrane. An N6-acetyllysine modification is found at Lys-1349.

It belongs to the plexin family. In terms of assembly, interacts with NRP1 and NRP2. In terms of tissue distribution, expressed in the developing nervous system. Widely expressed in both the central and peripheral nervous systems. Expressed in the peripheral ganglia, somatosensory, olfactory, visual, auditory and equilibrium systems.

The protein resides in the cell membrane. Functionally, coreceptor for SEMA3A. Necessary for signaling by class 3 semaphorins and subsequent remodeling of the cytoskeleton. Plays a role in axon guidance in the developing nervous system. Class 3 semaphorins bind to a complex composed of a neuropilin and a plexin. The plexin modulates the affinity of the complex for specific semaphorins, and its cytoplasmic domain is required for the activation of down-stream signaling events in the cytoplasm. This chain is Plexin-A4 (Plxna4), found in Mus musculus (Mouse).